Consider the following 342-residue polypeptide: tRNA N6-adenosine threonylcarbamoyltransferase (342 aa).

Residues H115 and H119 each contribute to the Fe cation site. Residues 138–142 (IISGG), D171, G184, D188, and N276 contribute to the substrate site. D304 is a Fe cation binding site.

The protein belongs to the KAE1 / TsaD family. Fe(2+) serves as cofactor.

The protein localises to the cytoplasm. The enzyme catalyses L-threonylcarbamoyladenylate + adenosine(37) in tRNA = N(6)-L-threonylcarbamoyladenosine(37) in tRNA + AMP + H(+). In terms of biological role, required for the formation of a threonylcarbamoyl group on adenosine at position 37 (t(6)A37) in tRNAs that read codons beginning with adenine. Is involved in the transfer of the threonylcarbamoyl moiety of threonylcarbamoyl-AMP (TC-AMP) to the N6 group of A37, together with TsaE and TsaB. TsaD likely plays a direct catalytic role in this reaction. This Endomicrobium trichonymphae protein is tRNA N6-adenosine threonylcarbamoyltransferase.